The following is a 305-amino-acid chain: Olfactory receptor 9G1 (305 aa).

Over 1–24 (MQRSNHTVTEFILLGFTTDPGMQL) the chain is Extracellular. A glycan (N-linked (GlcNAc...) asparagine) is linked at Asn5. The chain crosses the membrane as a helical span at residues 25–45 (GLFVVFLGVYSLTVVGNSTLI). Topologically, residues 46 to 53 (VLICNDSC) are cytoplasmic. A helical membrane pass occupies residues 54-74 (LHTPMYFFTGNLSFLDLWYSS). Residues 75 to 98 (VYTPKILVTCISEDKSISFAGCLC) are Extracellular-facing. A disulfide bridge links Cys96 with Cys188. The chain crosses the membrane as a helical span at residues 99–119 (QFFFSAGLAYSECYLLAAVAY). Residues 120–138 (DRYVAISKPLLYAQAMSIK) are Cytoplasmic-facing. Residues 139 to 159 (LCALLVAVSYCGGFINSSIIT) form a helical membrane-spanning segment. The Extracellular segment spans residues 160–196 (KKTFSFNFCRENIIDDFFCDLLPLVELACGEKGGYKI). A helical transmembrane segment spans residues 197 to 216 (MMYFLLASNVICPAVLILAS). Over 217–236 (YLFIITSVLRISSSKGYLKA) the chain is Cytoplasmic. Residues 237 to 257 (FSTCSSHLTSVTLYYGSILYI) form a helical membrane-spanning segment. The Extracellular segment spans residues 258-270 (YALPRSSYSFDMD). A helical membrane pass occupies residues 271 to 291 (KIVSTFYTVVFPMLNLMIYSL). Residues 292–305 (RNKDVKEALKKLLP) are Cytoplasmic-facing.

This sequence belongs to the G-protein coupled receptor 1 family.

The protein resides in the cell membrane. Its function is as follows. Odorant receptor. This Homo sapiens (Human) protein is Olfactory receptor 9G1 (OR9G1).